The following is a 926-amino-acid chain: Protein Niban 1 (926 aa).

Gly-2 carries the N-myristoyl glycine lipid modification. Phosphoserine is present on residues Ser-578, Ser-581, Ser-595, Ser-601, and Ser-640. Disordered regions lie at residues 604–699 and 719–889; these read LPGA…VPGS and VEND…EQVN. A compositionally biased stretch (polar residues) spans 661–672; it reads VENTAGPLSSHL. Ser-699 carries the phosphoserine modification. Residues 733 to 745 are compositionally biased toward basic and acidic residues; sequence NIKEEESKIHPEA. Ser-755 carries the phosphoserine modification. A compositionally biased stretch (basic and acidic residues) spans 756–767; that stretch reads CEEREVREKEAQ. Positions 784-797 are enriched in low complexity; it reads GRGSTSQSTSGGLT. The span at 840–854 shows a compositional bias: polar residues; that stretch reads VTVTPQEDATLSSNP. Ser-923 is subject to Phosphoserine.

It belongs to the Niban family.

The protein localises to the cytoplasm. It localises to the membrane. Its function is as follows. Regulates phosphorylation of a number of proteins involved in translation regulation including EIF2A, EIF4EBP1 and RPS6KB1. May be involved in the endoplasmic reticulum stress response. The chain is Protein Niban 1 from Mus musculus (Mouse).